Reading from the N-terminus, the 363-residue chain is 3-dehydroquinate synthase (363 aa).

Residues 134 to 135, lysine 147, and lysine 156 contribute to the NAD(+) site; that span reads TT. The Zn(2+) site is built by glutamate 189, histidine 254, and histidine 271.

This sequence belongs to the sugar phosphate cyclases superfamily. Dehydroquinate synthase family. Co(2+) is required as a cofactor. Zn(2+) serves as cofactor. The cofactor is NAD(+).

The protein localises to the cytoplasm. The enzyme catalyses 7-phospho-2-dehydro-3-deoxy-D-arabino-heptonate = 3-dehydroquinate + phosphate. Its pathway is metabolic intermediate biosynthesis; chorismate biosynthesis; chorismate from D-erythrose 4-phosphate and phosphoenolpyruvate: step 2/7. Catalyzes the conversion of 3-deoxy-D-arabino-heptulosonate 7-phosphate (DAHP) to dehydroquinate (DHQ). The polypeptide is 3-dehydroquinate synthase (Prochlorococcus marinus (strain MIT 9312)).